The following is a 376-amino-acid chain: MSIRLDNISKHFGQFQALAPLSLKIEDGEMIGLLGPSGSGKTTLLRIIAGLEGADSGTIHFRNRDVTNVHVRDRRVGFVFQNYALFRHMTVADNVAFGLQVMERAQRPNPAEIQKRVKQLLEIVQLGHLAHRYPEQLSGGQKQRIALARALATQPEVLLLDEPFGALDAKVRKELRRWLRSLHDELGFTSVFVTHDQDEALELSDRVVVMSNGRIEQIDSPVELYAQPNSRFVFDFFGNVNQFAGEWQNGQWVNGSAFIQPPESDATRQSGLLYVRSHELALSDKENSQASLPFEVVSINPVGAEVRVELASVGWQSQELWEAKLSHRSLSEKRLSRGDQVFATPQVGYFFASEGQSSPSVLRWPFLAPGSLMFEI.

Residues 3-237 (IRLDNISKHF…PNSRFVFDFF (235 aa)) enclose the ABC transporter domain. An ATP-binding site is contributed by 35-42 (GPSGSGKT).

Belongs to the ABC transporter superfamily. Sulfate/tungstate importer (TC 3.A.1.6) family. In terms of assembly, the complex is composed of two ATP-binding proteins (CysA), two transmembrane proteins (CysT and CysW) and a solute-binding protein (CysP).

It localises to the cell inner membrane. It carries out the reaction sulfate(out) + ATP + H2O = sulfate(in) + ADP + phosphate + H(+). It catalyses the reaction thiosulfate(out) + ATP + H2O = thiosulfate(in) + ADP + phosphate + H(+). In terms of biological role, part of the ABC transporter complex CysAWTP involved in sulfate/thiosulfate import. Responsible for energy coupling to the transport system. This chain is Sulfate/thiosulfate import ATP-binding protein CysA, found in Vibrio cholerae serotype O1 (strain ATCC 39315 / El Tor Inaba N16961).